The sequence spans 221 residues: Peptide methionine sulfoxide reductase MsrA (221 aa).

The active site involves cysteine 54.

The protein belongs to the MsrA Met sulfoxide reductase family.

The enzyme catalyses L-methionyl-[protein] + [thioredoxin]-disulfide + H2O = L-methionyl-(S)-S-oxide-[protein] + [thioredoxin]-dithiol. It catalyses the reaction [thioredoxin]-disulfide + L-methionine + H2O = L-methionine (S)-S-oxide + [thioredoxin]-dithiol. Its function is as follows. Has an important function as a repair enzyme for proteins that have been inactivated by oxidation. Catalyzes the reversible oxidation-reduction of methionine sulfoxide in proteins to methionine. The polypeptide is Peptide methionine sulfoxide reductase MsrA (Methylobacterium nodulans (strain LMG 21967 / CNCM I-2342 / ORS 2060)).